Here is a 162-residue protein sequence, read N- to C-terminus: MMSETGFIDVKIFPQRLLKPETAEKLLNRIYELEGIVRVLVHGPSIPDRVYYGPARGTEVNHSDRRKITVRGEEFELRVKVGEIIVGMLPETLEEKMETIEEILDEVLPCSYKVFIGAFTKKDITISDYLKYGLKFEEKIDPRVIGMVDPSSRMKDTVVNIK.

As to quaternary structure, MCR is composed of three subunits: alpha, beta, and gamma. The function of protein D is not known.

The polypeptide is Methyl-coenzyme M reductase II operon protein D (mrtD) (Methanothermobacter thermautotrophicus (strain ATCC 29096 / DSM 1053 / JCM 10044 / NBRC 100330 / Delta H) (Methanobacterium thermoautotrophicum)).